The chain runs to 160 residues: Small ribosomal subunit protein uS9 (160 aa).

It belongs to the universal ribosomal protein uS9 family.

This Mesorhizobium japonicum (strain LMG 29417 / CECT 9101 / MAFF 303099) (Mesorhizobium loti (strain MAFF 303099)) protein is Small ribosomal subunit protein uS9.